The primary structure comprises 375 residues: Succinyl-diaminopimelate desuccinylase (375 aa).

A Zn(2+)-binding site is contributed by His66. The active site involves Asp68. Asp99 is a Zn(2+) binding site. The active-site Proton acceptor is the Glu133. Zn(2+) is bound by residues Glu134, Glu162, and His348.

This sequence belongs to the peptidase M20A family. DapE subfamily. Homodimer. Zn(2+) is required as a cofactor. It depends on Co(2+) as a cofactor.

It carries out the reaction N-succinyl-(2S,6S)-2,6-diaminopimelate + H2O = (2S,6S)-2,6-diaminopimelate + succinate. Its pathway is amino-acid biosynthesis; L-lysine biosynthesis via DAP pathway; LL-2,6-diaminopimelate from (S)-tetrahydrodipicolinate (succinylase route): step 3/3. Catalyzes the hydrolysis of N-succinyl-L,L-diaminopimelic acid (SDAP), forming succinate and LL-2,6-diaminopimelate (DAP), an intermediate involved in the bacterial biosynthesis of lysine and meso-diaminopimelic acid, an essential component of bacterial cell walls. The sequence is that of Succinyl-diaminopimelate desuccinylase from Yersinia pestis bv. Antiqua (strain Antiqua).